Consider the following 313-residue polypeptide: Formimidoylglutamase (313 aa).

Residues His-130, Asp-155, His-157, Asp-159, Asp-241, and Asp-243 each coordinate Mn(2+).

This sequence belongs to the arginase family. The cofactor is Mn(2+).

It carries out the reaction N-formimidoyl-L-glutamate + H2O = formamide + L-glutamate. The protein operates within amino-acid degradation; L-histidine degradation into L-glutamate; L-glutamate from N-formimidoyl-L-glutamate (hydrolase route): step 1/1. Functionally, catalyzes the conversion of N-formimidoyl-L-glutamate to L-glutamate and formamide. This is Formimidoylglutamase from Salmonella arizonae (strain ATCC BAA-731 / CDC346-86 / RSK2980).